Consider the following 479-residue polypeptide: PRAME family member 18 (479 aa).

One copy of the LRR 1 repeat lies at 15–38 (QSLLRDQALAISVLDELPRELFPP). The LRR 1; degenerate repeat unit spans residues 97 to 124 (RWKLQVLEMRDVDENFWTIWSGARLLSC). An LRR 2; degenerate repeat occupies 179–203 (HLCCTKVVNYSMSILNFRNILETVY). An LRR 3; degenerate repeat occupies 204–230 (PDSIQVLEIWNMCWLCMIVEFSRYLSQ). An LRR 4; degenerate repeat occupies 231–265 (MRNLRKLFISDGCRYLLSSDSQEQLVAEFSSVLLR). LRR repeat units follow at residues 266 to 291 (LENL…IRCL), 292 to 323 (RSPL…SQLK), 324 to 342 (QLNL…PLRA), 348 to 375 (AATL…ALSR), and 376 to 400 (CSNL…LLRH).

This sequence belongs to the PRAME family.

This is PRAME family member 18 from Homo sapiens (Human).